The primary structure comprises 338 residues: NAC domain-containing protein 46 (338 aa).

One can recognise an NAC domain in the interval leucine 20–lysine 171. A DNA-binding region spans residues valine 118–threonine 177.

Interacts with RCD1.

It localises to the nucleus. Transcriptional activator that acts as a positive regulator of leaf senescence. Activates NYC1, SGR1, SGR2 and PAO, which are genes involved in chlorophyll catabolic processes. Activates senescence-associated genes, such as RNS1, SAG12 and SAG13. The polypeptide is NAC domain-containing protein 46 (Arabidopsis thaliana (Mouse-ear cress)).